Consider the following 200-residue polypeptide: Putative calcium-activated potassium channel subunit beta (200 aa).

The Cytoplasmic segment spans residues 1–19 (MLAKKLVTAQKRGETRALC). The chain crosses the membrane as a helical span at residues 20-40 (LGLGMVACSMMMYFFIGITIV). Residues 41 to 166 (PFYTKSVWTT…LSRLYPPKGL (126 aa)) lie on the Extracellular side of the membrane. The N-linked (GlcNAc...) asparagine glycan is linked to Asn-89. Residues 167–187 (LFTFLWPTLMFTGGCLIIVLV) traverse the membrane as a helical segment. Residues 188–200 (KISQYFSVLSARQ) lie on the Cytoplasmic side of the membrane.

This sequence belongs to the KCNMB (TC 8.A.14.1) family. KCNMB1 subfamily. In terms of assembly, probably interacts with KCNMA1 tetramer.

It is found in the membrane. In terms of biological role, probable regulatory subunit of the calcium activated potassium KCNMA1 (maxiK) channel that modulates the calcium sensitivity and gating kinetics of KCNMA1, thereby contributing to KCNMA1 channel diversity. Increases the apparent Ca(2+)/voltage sensitivity of the KCNMA1 channel. The polypeptide is Putative calcium-activated potassium channel subunit beta (KCNMB1) (Coturnix japonica (Japanese quail)).